A 188-amino-acid chain; its full sequence is Elongation factor P (188 aa).

It belongs to the elongation factor P family.

Its subcellular location is the cytoplasm. It functions in the pathway protein biosynthesis; polypeptide chain elongation. In terms of biological role, involved in peptide bond synthesis. Stimulates efficient translation and peptide-bond synthesis on native or reconstituted 70S ribosomes in vitro. Probably functions indirectly by altering the affinity of the ribosome for aminoacyl-tRNA, thus increasing their reactivity as acceptors for peptidyl transferase. This chain is Elongation factor P, found in Leptospira interrogans serogroup Icterohaemorrhagiae serovar copenhageni (strain Fiocruz L1-130).